Here is a 718-residue protein sequence, read N- to C-terminus: Acetolactate synthase, mitochondrial (718 aa).

Disordered stretches follow at residues 1 to 50 (MLTR…APVY) and 72 to 101 (RKIQ…APQP). Positions 32 to 45 (RYSNNIHTSSTQNA) are enriched in polar residues. The segment covering 76–99 (SSASTAAASPAVRPQPAQHFQAAP) has biased composition (low complexity). E173 lines the thiamine diphosphate pocket. R275 is a binding site for FAD. The segment at 296 to 327 (IPAKSAQPGHSPYLPSNPLNPSSQPSDPLPGD) is disordered. Low complexity predominate over residues 306-325 (SPYLPSNPLNPSSQPSDPLP). Residues 397-418 (HGSA…LGVR) and 449-468 (EIQP…VLGD) each bind FAD. Residues 541 to 621 (QHQMWACQYY…VKVLLFNNEF (81 aa)) are thiamine pyrophosphate binding. The Mg(2+) site is built by D592 and N619.

This sequence belongs to the TPP enzyme family. It depends on Mg(2+) as a cofactor. Thiamine diphosphate serves as cofactor.

It localises to the mitochondrion. The catalysed reaction is 2 pyruvate + H(+) = (2S)-2-acetolactate + CO2. It functions in the pathway amino-acid biosynthesis; L-isoleucine biosynthesis; L-isoleucine from 2-oxobutanoate: step 1/4. The protein operates within amino-acid biosynthesis; L-valine biosynthesis; L-valine from pyruvate: step 1/4. The sequence is that of Acetolactate synthase, mitochondrial (ILV2) from Cryptococcus neoformans var. neoformans serotype D (strain JEC21 / ATCC MYA-565) (Filobasidiella neoformans).